Consider the following 272-residue polypeptide: uncharacterized protein (272 aa).

The signal sequence occupies residues 1-20 (MMEPKSIFLLGLLLFRVGKL).

This is an uncharacterized protein from Caenorhabditis elegans.